Reading from the N-terminus, the 639-residue chain is MHGLLLAAGLISLPLHVLAHPQPSSTSLAGRAVDLNEYRIGHRSSYTSNDEMMKQPSIASFRAGTYVEVATEMVKQTMPNMEFRLVDDHYIGQSGIGHVRFRQTMHGIDIDNSDFNVNAYDNFYQIGQDGKVLSHGNSFYTGPAPESSPVQKRDFSDPMQALHGVRKALNLPIKAEGATVENMSEHKVMFKGTSGALSDPTAKLCYMAKEDGSLALTWRVETDIGDNWLLSYMDAKDTGKVHNVVDYVAHATFQVYKWGLADPTEGNREILTNPWNLQTSPLTWLADGQNNFTATRGNNAIAQYNPDGGNDYENNYRPSPKNLKFEYPYSANMDPPKTYIDASVTQLFYTSNVCHDLYYMLGFNEKAGNFQVNNRGQGGKGNDYVILNAQDGSGTNNANFATPPDGQPGRMRAYIWTRANPPRDASFEAGTIIHEYTHGLSNRLCGGPANSRCLNAIESGGMGEGWGDFYATAVRLKPKDTRKTNYVKGGWVNNSPKGVRMYPYSTDMSVNPLVYTSNNQLNEVHAIGTVWATMLYELLWNLIDKHGKNDGPVPIFKNGIPSDGKYLAMKIVMDGMAIQPCNPNFVQARDAILDADKNLTKASNKCEIWKAFAKRGLGVGAKFDPKNRIGSNEVPKECK.

The N-terminal stretch at 1–19 is a signal peptide; sequence MHGLLLAAGLISLPLHVLA. The propeptide occupies 20 to 250; the sequence is HPQPSSTSLA…VHNVVDYVAH (231 aa). A glycan (N-linked (GlcNAc...) asparagine) is linked at N291. Position 434 (H434) interacts with Zn(2+). The active site involves E435. Residue H438 coordinates Zn(2+). N-linked (GlcNAc...) asparagine glycosylation is present at N598.

The protein belongs to the peptidase M36 family. Zn(2+) is required as a cofactor.

The protein localises to the secreted. Functionally, secreted metalloproteinase probably acting as a virulence factor. This Arthroderma otae (strain ATCC MYA-4605 / CBS 113480) (Microsporum canis) protein is Extracellular metalloproteinase 1 (MEP1).